A 202-amino-acid chain; its full sequence is Peptidyl-tRNA hydrolase (202 aa).

Residue Y16 coordinates tRNA. H21 (proton acceptor) is an active-site residue. TRNA contacts are provided by Y68, N70, and N116.

This sequence belongs to the PTH family. In terms of assembly, monomer.

The protein resides in the cytoplasm. The catalysed reaction is an N-acyl-L-alpha-aminoacyl-tRNA + H2O = an N-acyl-L-amino acid + a tRNA + H(+). In terms of biological role, hydrolyzes ribosome-free peptidyl-tRNAs (with 1 or more amino acids incorporated), which drop off the ribosome during protein synthesis, or as a result of ribosome stalling. Its function is as follows. Catalyzes the release of premature peptidyl moieties from peptidyl-tRNA molecules trapped in stalled 50S ribosomal subunits, and thus maintains levels of free tRNAs and 50S ribosomes. This is Peptidyl-tRNA hydrolase from Treponema pallidum (strain Nichols).